The following is a 131-amino-acid chain: Small ribosomal subunit protein bS6 (131 aa).

A disordered region spans residues 98–131 (EASPMVKAKDERRERREDFANETSEETEAGDSEE). A compositionally biased stretch (basic and acidic residues) spans 104–116 (KAKDERRERREDF). The segment covering 120-131 (TSEETEAGDSEE) has biased composition (acidic residues).

It belongs to the bacterial ribosomal protein bS6 family.

Its function is as follows. Binds together with bS18 to 16S ribosomal RNA. The sequence is that of Small ribosomal subunit protein bS6 from Edwardsiella ictaluri (strain 93-146).